Consider the following 20-residue polypeptide: Toxin TpF21-Cocle (20 aa).

The LCN-type CS-alpha/beta domain occupies 1–20; the sequence is KDGYLVGNDGCKYSCNTYPK.

Belongs to the long (4 C-C) scorpion toxin superfamily. Sodium channel inhibitor family. Beta subfamily. As to expression, expressed by the venom gland.

It is found in the secreted. In terms of biological role, beta toxins bind voltage-independently at site-4 of sodium channels (Nav) and shift the voltage of activation toward more negative potentials thereby affecting sodium channel activation and promoting spontaneous and repetitive firing. The sequence is that of Toxin TpF21-Cocle from Tityus pachyurus (Colombian scorpion).